A 323-amino-acid polypeptide reads, in one-letter code: METKKNNSEYIPEFDKSFRHPRYWGAWLGVAAMAGIALTPPKFRDPILARLGRFAGRLGKSSRRRALINLSLCFPERSEAEREAIVDEMFATAPQAMAMMAELAIRGPEKIQPRVGWQGLEIIEEMRRNNEKVIFLVPHGWAVDIPAMLMASQGQKMAAMFHNQGNPVFDYVWNTVRRRFGGRLHARNDGIKPFIQSVRQGYWGYYLPDQDHGPEHSEFVDFFATYKATLPAIGRLMKVCRARVVPLFPIYDGKTHRLTIQVRPPMDDLLEADDHTIERRMNEEVEIFVGPRPEQYTWILKLLKTRKPGEIQPYKRKDLYPIK.

Residues 23–43 form a helical membrane-spanning segment; it reads YWGAWLGVAAMAGIALTPPKF. Positions 139 to 144 match the HXXXXD motif motif; that stretch reads HGWAVD.

It belongs to the LpxL/LpxM/LpxP family. LpxM subfamily.

It is found in the cell inner membrane. It carries out the reaction an alpha-Kdo-(2-&gt;4)-alpha-Kdo-(2-&gt;6)-(acyl)-lipid IVA + a fatty acyl-[ACP] = an alpha-Kdo-(2-&gt;4)-alpha-Kdo-(2-&gt;6)-lipid A + holo-[ACP]. It participates in glycolipid biosynthesis; KDO(2)-lipid A biosynthesis; KDO(2)-lipid A from CMP-3-deoxy-D-manno-octulosonate and lipid IV(A): step 4/4. The protein operates within bacterial outer membrane biogenesis; lipopolysaccharide biosynthesis. In terms of biological role, catalyzes the transfer of an acyl chain from an acyl-[acyl-carrier-protein] (ACP) to a Kdo(2)-(acyl)-lipid IV(A) to form a Kdo(2)-lipid A. In Shigella flexneri, this protein is Lipid A biosynthesis acyltransferase 1.